The sequence spans 415 residues: Serine/threonine transporter SstT (415 aa).

8 consecutive transmembrane segments (helical) span residues glycine 15–alanine 35, leucine 45–valine 65, isoleucine 85–phenylalanine 105, alanine 142–leucine 162, valine 193–glycine 213, leucine 217–valine 237, glycine 301–valine 321, and valine 331–isoleucine 351.

The protein belongs to the dicarboxylate/amino acid:cation symporter (DAACS) (TC 2.A.23) family.

Its subcellular location is the cell inner membrane. The enzyme catalyses L-serine(in) + Na(+)(in) = L-serine(out) + Na(+)(out). It carries out the reaction L-threonine(in) + Na(+)(in) = L-threonine(out) + Na(+)(out). Its function is as follows. Involved in the import of serine and threonine into the cell, with the concomitant import of sodium (symport system). The sequence is that of Serine/threonine transporter SstT from Photorhabdus laumondii subsp. laumondii (strain DSM 15139 / CIP 105565 / TT01) (Photorhabdus luminescens subsp. laumondii).